The primary structure comprises 362 residues: Cytochrome P450 monooxygenase-like protein avaN (362 aa).

The helical transmembrane segment at 3–23 threads the bilayer; it reads VILAIFIAAAGCLFSSWRIYW.

This sequence belongs to the cytochrome P450 family.

The protein localises to the membrane. The protein operates within secondary metabolite biosynthesis. In terms of biological role, cytochrome P450 monooxygenase-like protein; part of the cluster that mediates the biosynthesis of a highly modified cyclo-arginine-tryptophan dipeptide (cRW). The first step of the pathway is perfornmed by the arginine-containing cyclodipeptide synthase (RCPDS) avaA that acts as the scaffold-generating enzyme and is responsible for formation of the cyclo-Arg-Trp (cRW) diketopiperazine. AvaB then acts as a multifunctional flavoenzyme that is responsible for generating the cyclo-Arg-formylkynurenine DKP, which can be deformylated by avaC. AvaB then further catalyzes an additional N-oxidation followed by cyclization and dehydration. The next step is an N-acetylation of the guanidine group catalyzed by the arginine N-acetyltransferase avaD. The roles of the additional enzymes identified within the ava cluster still have to be determined. The polypeptide is Cytochrome P450 monooxygenase-like protein avaN (Aspergillus versicolor).